The primary structure comprises 366 residues: MSKFKSLLLLFGTLILLSGCSNIEIFNAKGPVASSQKFLILYSIVFMLVICFVVLGMFAIFIYKYSYNKNAESGKMHHNAIIETIWFVIPIIIVAALAIPTVKTLYDYEKPPKSEKDPMVVYAVSAGYKWFFAYPDEHIETVNTLTIPKDRPVVFKLQAMDTMTSFWIPQLGGQKYAMTGMTMNWTLEASQTGTFRGRNSNFNGEGFSRQTFKVNAVSQKDYDKWVKEVKGKKTLDQDTFDKQLLPSTPNKALEFNGTHMAFVDPAADPEYIFYAYKRFNFELKDPNFTSEENMFKDVSEKPLIPARKAQITNANYKRHGMKLMILGNDEPYNNEFKKDESKNAKEMKKISKDAQDQDNDDHGGGH.

Residues 1–19 form the signal peptide; that stretch reads MSKFKSLLLLFGTLILLSG. Cysteine 20 carries N-palmitoyl cysteine lipidation. Cysteine 20 carries S-diacylglycerol cysteine lipidation. 2 helical membrane-spanning segments follow: residues 38–58 and 80–100; these read FLILYSIVFMLVICFVVLGMF and AIIETIWFVIPIIIVAALAIP. Residues 330 to 366 are disordered; sequence EPYNNEFKKDESKNAKEMKKISKDAQDQDNDDHGGGH. Residues 335-366 show a composition bias toward basic and acidic residues; that stretch reads EFKKDESKNAKEMKKISKDAQDQDNDDHGGGH.

It belongs to the cytochrome c oxidase subunit 2 family.

The protein localises to the cell membrane. It carries out the reaction 2 a quinol + O2 = 2 a quinone + 2 H2O. Functionally, catalyzes quinol oxidation with the concomitant reduction of oxygen to water. Subunit II transfers the electrons from a quinol to the binuclear center of the catalytic subunit I. The sequence is that of Probable quinol oxidase subunit 2 (qoxA) from Staphylococcus aureus (strain bovine RF122 / ET3-1).